The following is a 371-amino-acid chain: Flagellar P-ring protein (371 aa).

The first 28 residues, 1-28, serve as a signal peptide directing secretion; it reads MPARPTPPAVPLALALAAALAAPAPAAA.

It belongs to the FlgI family. As to quaternary structure, the basal body constitutes a major portion of the flagellar organelle and consists of four rings (L,P,S, and M) mounted on a central rod.

The protein localises to the periplasm. The protein resides in the bacterial flagellum basal body. Assembles around the rod to form the L-ring and probably protects the motor/basal body from shearing forces during rotation. The sequence is that of Flagellar P-ring protein from Anaeromyxobacter dehalogenans (strain 2CP-C).